The sequence spans 276 residues: Elongation factor Ts, mitochondrial (276 aa).

It belongs to the EF-Ts family.

The protein resides in the mitochondrion. Associates with the EF-Tu.GDP complex and induces the exchange of GDP to GTP. It remains bound to the aminoacyl-tRNA.EF-Tu.GTP complex up to the GTP hydrolysis stage on the ribosome. This Leishmania infantum protein is Elongation factor Ts, mitochondrial.